Here is a 419-residue protein sequence, read N- to C-terminus: tRNA(Ile)-lysidine synthase (419 aa).

ATP is bound at residue 25–30; that stretch reads SGGIDS.

It belongs to the tRNA(Ile)-lysidine synthase family.

It is found in the cytoplasm. It catalyses the reaction cytidine(34) in tRNA(Ile2) + L-lysine + ATP = lysidine(34) in tRNA(Ile2) + AMP + diphosphate + H(+). Its function is as follows. Ligates lysine onto the cytidine present at position 34 of the AUA codon-specific tRNA(Ile) that contains the anticodon CAU, in an ATP-dependent manner. Cytidine is converted to lysidine, thus changing the amino acid specificity of the tRNA from methionine to isoleucine. The polypeptide is tRNA(Ile)-lysidine synthase (Actinobacillus pleuropneumoniae serotype 7 (strain AP76)).